Reading from the N-terminus, the 887-residue chain is Phosphatidylinositol 3-kinase catalytic subunit type 3 (887 aa).

A C2 PI3K-type domain is found at 35–184 (YKAVLEDPML…LAKLTKAHRQ (150 aa)). Positions 149–170 (VEADGSEPTRTPGRTSSTLSED) are disordered. Over residues 156 to 170 (PTRTPGRTSSTLSED) the composition is skewed to polar residues. Thr-163 bears the Phosphothreonine; by AMPK mark. Ser-165 bears the Phosphoserine; by AMPK mark. Residues Ser-244, Ser-261, and Ser-282 each carry the phosphoserine modification. Residues 283–520 (DHDLKPNATT…PKTHEMYLNV (238 aa)) enclose the PIK helical domain. The interval 415–466 (LEPTKKDSQTSASESLSNSGVSSGDIDSSQIITNPLPPVASPPPASKAKEVS) is disordered. The segment covering 425-437 (SASESLSNSGVSS) has biased composition (low complexity). A compositionally biased stretch (pro residues) spans 449–459 (PLPPVASPPPA). The PI3K/PI4K catalytic domain occupies 605 to 871 (IPETATLFKS…LIDESVHALF (267 aa)). The segment at 611–617 (LFKSALM) is G-loop. Residues 740 to 748 (GVGDRHLDN) are catalytic loop. The interval 759-780 (HIDFGYILGRDPKPLPPPMKLN) is activation loop.

This sequence belongs to the PI3/PI4-kinase family. In terms of assembly, component of the PI3K (PI3KC3/PI3K-III/class III phosphatidylinositol 3-kinase) complex the core of which is composed of the catalytic subunit PIK3C3, the regulatory subunit PIK3R4 and BECN1 associating with additional regulatory/auxiliary subunits to form alternative complex forms. Alternative complex forms containing a fourth regulatory subunit in a mutually exclusive manner are: the PI3K complex I (PI3KC3-C1) containing ATG14, and the PI3K complex II (PI3KC3-C2) containing UVRAG. PI3KC3-C1 displays a V-shaped architecture with PIK3R4 serving as a bridge between PIK3C3 and the ATG14:BECN1 subcomplex. Both, PI3KC3-C1 and PI3KC3-C2, can associate with further regulatory subunits such as RUBCN, SH3GLB1/Bif-1 and AMBRA1. PI3KC3-C1 probably associates with PIK3CB. Interacts with RAB7A in the presence of PIK3R4. Interacts with AMBRA1. Interacts with BECN1P1/BECN2. Interacts with SLAMF1. May be a component of a complex composed of RAB5A (in GDP-bound form), DYN2 and PIK3C3. Interacts with NCKAP1L. Interacts with ATG14; this interaction is increased in the absence of TMEM39A. Interacts with STEEP1; the interaction is STING1-dependent and required for trafficking of STING1 from the endoplasmic reticulum. Interacts with YWHAG. Interacts with ARMC3. It depends on Mn(2+) as a cofactor. In terms of processing, ubiquitinated via 'Lys-29'- and 'Lys-48'-linked ubiquitination by UBE3C, promoting its degradation. Deubiquitination by ZRANB1/TRABID promotes its stabilization, leading to autophagosome maturation.

The protein resides in the midbody. The protein localises to the late endosome. Its subcellular location is the cytoplasmic vesicle. It localises to the autophagosome. It catalyses the reaction a 1,2-diacyl-sn-glycero-3-phospho-(1D-myo-inositol) + ATP = a 1,2-diacyl-sn-glycero-3-phospho-(1D-myo-inositol-3-phosphate) + ADP + H(+). In terms of biological role, catalytic subunit of the PI3K complex that mediates formation of phosphatidylinositol 3-phosphate; different complex forms are believed to play a role in multiple membrane trafficking pathways: PI3KC3-C1 is involved in initiation of autophagosomes and PI3KC3-C2 in maturation of autophagosomes and endocytosis. As part of PI3KC3-C1, promotes endoplasmic reticulum membrane curvature formation prior to vesicle budding. Involved in regulation of degradative endocytic trafficking and required for the abscission step in cytokinesis, probably in the context of PI3KC3-C2. Involved in the transport of lysosomal enzyme precursors to lysosomes. Required for transport from early to late endosomes. The sequence is that of Phosphatidylinositol 3-kinase catalytic subunit type 3 from Mus musculus (Mouse).